The sequence spans 48 residues: Large ribosomal subunit protein bL33B (48 aa).

It belongs to the bacterial ribosomal protein bL33 family.

This chain is Large ribosomal subunit protein bL33B, found in Lactococcus lactis subsp. cremoris (strain MG1363).